Reading from the N-terminus, the 449-residue chain is C4-dicarboxylate transport protein 1 (449 aa).

9 helical membrane passes run 14-34 (SIFL…VGIP), 47-67 (FIKL…VNGI), 83-103 (SVIY…VVAY), 157-177 (ILQV…VGEQ), 195-215 (IMGM…AFTT), 226-246 (LGAL…AVLG), 312-332 (FSIY…TPLA), 359-379 (VILA…LVLV), and 385-405 (FMGI…TVTI).

The protein belongs to the dicarboxylate/amino acid:cation symporter (DAACS) (TC 2.A.23) family.

It localises to the cell inner membrane. Functionally, responsible for the transport of dicarboxylates such as succinate, fumarate, and malate from the periplasm across the membrane. This is C4-dicarboxylate transport protein 1 from Pseudomonas aeruginosa (strain UCBPP-PA14).